Consider the following 247-residue polypeptide: 2-amino-5-formylamino-6-ribosylaminopyrimidin-4(3H)-one 5'-monophosphate deformylase (247 aa).

Positions 41, 43, 52, and 121 each coordinate Fe cation.

Belongs to the creatininase superfamily. FAPy deformylase family. Homodimer. Fe(2+) serves as cofactor. Zn(2+) is required as a cofactor.

The enzyme catalyses 2-amino-5-formylamino-6-(5-phospho-D-ribosylamino)pyrimidin-4(3H)-one + H2O = 2,5-diamino-6-(1-D-ribosylamino)pyrimidin-4(3H)-one 5'-phosphate + formate + H(+). It participates in cofactor biosynthesis; coenzyme F420 biosynthesis. Its pathway is cofactor biosynthesis; riboflavin biosynthesis. Catalyzes the hydrolysis of the formamide of 2-amino-5-formylamino-6-ribosylamino-4(3H)-pyrimidinone 5'-monophosphate (FAPy) to form 2,5-diamino-6-ribosylamino-4(3H)-pyrimidinone 5'-phosphate (APy). The chain is 2-amino-5-formylamino-6-ribosylaminopyrimidin-4(3H)-one 5'-monophosphate deformylase from Methanothermus fervidus (strain ATCC 43054 / DSM 2088 / JCM 10308 / V24 S).